Here is a 580-residue protein sequence, read N- to C-terminus: DNA mismatch repair protein MutL (580 aa).

Belongs to the DNA mismatch repair MutL/HexB family.

Its function is as follows. This protein is involved in the repair of mismatches in DNA. It is required for dam-dependent methyl-directed DNA mismatch repair. May act as a 'molecular matchmaker', a protein that promotes the formation of a stable complex between two or more DNA-binding proteins in an ATP-dependent manner without itself being part of a final effector complex. The protein is DNA mismatch repair protein MutL of Chlamydia felis (strain Fe/C-56) (Chlamydophila felis).